The primary structure comprises 293 residues: N-acetylneuraminate lyase (293 aa).

Aceneuramate is bound by residues Ser-48 and Ser-49. The Proton donor role is filled by Tyr-137. Catalysis depends on Lys-165, which acts as the Schiff-base intermediate with substrate. 5 residues coordinate aceneuramate: Thr-167, Gly-189, Asp-191, Glu-192, and Ser-208.

This sequence belongs to the DapA family. NanA subfamily. In terms of assembly, homotetramer.

The protein localises to the cytoplasm. The catalysed reaction is aceneuramate = aldehydo-N-acetyl-D-mannosamine + pyruvate. The protein operates within amino-sugar metabolism; N-acetylneuraminate degradation; D-fructose 6-phosphate from N-acetylneuraminate: step 1/5. Catalyzes the reversible aldol cleavage of N-acetylneuraminic acid (sialic acid; Neu5Ac) to form pyruvate and N-acetylmannosamine (ManNAc) via a Schiff base intermediate. This is N-acetylneuraminate lyase from Staphylococcus aureus (strain MRSA252).